Consider the following 507-residue polypeptide: Protein DETOXIFICATION 39 (507 aa).

12 helical membrane passes run 58–78 (VLFR…GMGI), 92–112 (LAAA…MLGM), 141–161 (IVLA…YPIL), 178–198 (IAGL…QKFL), 209–229 (FISA…VYVM), 233–253 (FMGI…SQCF), 287–307 (AVMI…AGLL), 318–338 (SICM…NAAV), 359–379 (WTAT…VIWF), 403–423 (FLAI…VAVG), 433–453 (VNVG…GFTF), and 459–479 (GIWT…LYVT).

It belongs to the multi antimicrobial extrusion (MATE) (TC 2.A.66.1) family.

It is found in the membrane. The chain is Protein DETOXIFICATION 39 from Arabidopsis thaliana (Mouse-ear cress).